The chain runs to 237 residues: tRNA1(Val) (adenine(37)-N6)-methyltransferase (237 aa).

This sequence belongs to the methyltransferase superfamily. tRNA (adenine-N(6)-)-methyltransferase family.

The protein localises to the cytoplasm. It catalyses the reaction adenosine(37) in tRNA1(Val) + S-adenosyl-L-methionine = N(6)-methyladenosine(37) in tRNA1(Val) + S-adenosyl-L-homocysteine + H(+). Its function is as follows. Specifically methylates the adenine in position 37 of tRNA(1)(Val) (anticodon cmo5UAC). This is tRNA1(Val) (adenine(37)-N6)-methyltransferase from Bacteroides fragilis (strain YCH46).